The sequence spans 317 residues: L-lactate dehydrogenase (317 aa).

NAD(+)-binding positions include Val-16, Asp-37, Arg-42, Tyr-67, and 81–82 (GA). The substrate site is built by Gln-84 and Arg-90. Residues Ser-103, 120-122 (AAN), and Ser-145 each bind NAD(+). Residue 122–125 (NPVD) coordinates substrate. 150–153 (DSAR) contacts substrate. His-177 functions as the Proton acceptor in the catalytic mechanism. Residue Tyr-221 is modified to Phosphotyrosine. Thr-230 is a binding site for substrate.

It belongs to the LDH/MDH superfamily. LDH family. As to quaternary structure, homotetramer.

Its subcellular location is the cytoplasm. The enzyme catalyses (S)-lactate + NAD(+) = pyruvate + NADH + H(+). It participates in fermentation; pyruvate fermentation to lactate; (S)-lactate from pyruvate: step 1/1. Catalyzes the conversion of lactate to pyruvate. This chain is L-lactate dehydrogenase, found in Limosilactobacillus fermentum (strain NBRC 3956 / LMG 18251) (Lactobacillus fermentum).